Reading from the N-terminus, the 232-residue chain is GTP cyclohydrolase 1 (232 aa).

The tract at residues 1–24 is disordered; it reads MSDNLKSYQDNHIENEDEEIYERS. Residues cysteine 121, histidine 124, and cysteine 192 each contribute to the Zn(2+) site.

Belongs to the GTP cyclohydrolase I family. In terms of assembly, toroid-shaped homodecamer, composed of two pentamers of five dimers.

The catalysed reaction is GTP + H2O = 7,8-dihydroneopterin 3'-triphosphate + formate + H(+). It participates in cofactor biosynthesis; 7,8-dihydroneopterin triphosphate biosynthesis; 7,8-dihydroneopterin triphosphate from GTP: step 1/1. In terms of biological role, first enzyme in the biosynthesis of tetrahydrobiopterin (BH4). Catalyzes the conversion of GTP into dihydroneopterin triphosphate (7,8-dihydroneopterin 3'-triphosphate), which is subsequently catalyzed by 6-pyruvoyltetrahydropterin synthase (ptsA) and sepiapterin reductase (sprA). The sequence is that of GTP cyclohydrolase 1 (gchA) from Dictyostelium discoideum (Social amoeba).